The primary structure comprises 229 residues: Aspartate-rich protein 1 (229 aa).

Residues 84–106 are disordered; that stretch reads SEEDNDDAKILPSPVQGSSEDNL.

The sequence is that of Aspartate-rich protein 1 (DRICH1) from Homo sapiens (Human).